The sequence spans 2495 residues: Non-reducing polyketide synthase adrD (2495 aa).

Residues 14 to 252 are N-terminal acylcarrier protein transacylase domain (SAT); the sequence is VVFGPQSSEI…HHSRHVTAVQ (239 aa). Positions 386-807 constitute a Ketosynthase family 3 (KS3) domain; the sequence is VIPIAITGMG…GSNAALVVKQ (422 aa). Catalysis depends on for beta-ketoacyl synthase activity residues cysteine 551, histidine 686, and histidine 725. Residues 913-1222 form a malonyl-CoA:ACP transacylase (MAT) domain region; the sequence is LCFGGQNGNE…QALDLGGALA (310 aa). Serine 1000 acts as the For acyl/malonyl transferase activity in catalysis. The interval 1294–1422 is N-terminal hotdog fold; the sequence is KEFVQLLTKQ…GEISLHPFGQ (129 aa). The 308-residue stretch at 1294–1601 folds into the PKS/mFAS DH domain; it reads KEFVQLLTKQ…FTSVSIAGLS (308 aa). Residues 1295 to 1600 form a product template (PT) domain region; the sequence is EFVQLLTKQP…TFTSVSIAGL (306 aa). Catalysis depends on histidine 1325, which acts as the Proton acceptor; for dehydratase activity. The tract at residues 1450-1601 is C-terminal hotdog fold; sequence ESSGLKGFAV…FTSVSIAGLS (152 aa). Catalysis depends on aspartate 1508, which acts as the Proton donor; for dehydratase activity. Residues 1651 to 1725 enclose the Carrier domain; the sequence is SGHFMVVQEM…TLVQTIFPDA (75 aa). Serine 1685 is subject to O-(pantetheine 4'-phosphoryl)serine. Positions 1887 to 2120 are methyltransferase (CMeT) domain; that stretch reads QHTSEHNLLR…GFQWVDWTYN (234 aa). The segment at 2150–2495 is thioesterase (TE) domain; that stretch reads YLMNEETIVY…YEFLRDHVRY (346 aa). Active-site for thioesterase activity residues include serine 2273 and aspartate 2432.

It catalyses the reaction 3 malonyl-CoA + acetyl-CoA + 2 S-adenosyl-L-methionine = 3,5-dimethylorsellinate + 2 S-adenosyl-L-homocysteine + 3 CO2 + 4 CoA. Its pathway is secondary metabolite biosynthesis; terpenoid biosynthesis. Functionally, non-reducing polyketide synthase; part of the gene cluster that mediates the biosynthesis of andrastins, meroterpenoid compounds that exhibit inhibitory activity against ras farnesyltransferase, suggesting that they could be promising leads for antitumor agents. The first step of the pathway is the synthesis of 3,5-dimethylorsellinic acid (DMOA) by the polyketide synthase adrD via condensation of one acetyl-CoA starter unit with 3 malonyl-CoA units and 2 methylations. DMAO is then converted to farnesyl-DMAO by the prenyltransferase adrG. The methyltransferase adrK catalyzes the methylation of the carboxyl group of farnesyl-DMAO to farnesyl-DMAO methyl ester which is further converted to epoxyfarnesyl-DMAO methyl ester by the FAD-dependent monooxygenase adrH. The terpene cyclase adrI then catalyzes the carbon skeletal rearrangement to generate the andrastin E, the first compound in the pathway having the andrastin scaffold, with the tetracyclic ring system. The post-cyclization tailoring enzymes adrF, adrE, adrJ, and adrA, are involved in the conversion of andrastin E into andrastin A. The short chain dehydrogenase adrF is responsible for the oxidation of the C-3 a hydroxyl group of andrastin E to yield the corresponding ketone, andrastin D. The ketoreductase adrE stereoselectively reduces the carbonyl moiety to reverse the stereochemistry of the C-3 position to yield andrastin F. The acetyltransferase adrJ is the acetyltransferase that attaches the acetyl group to the C-3 hydroxyl group of andrastin F to yield andrastin C. Finally, the cytochrome P450 monooxygenase adrA catalyzes two sequential oxidation reactions of the C-23 methyl group, to generate the corresponding alcohol andrastin B, and aldehyde andrastin A. The polypeptide is Non-reducing polyketide synthase adrD (Penicillium roqueforti).